We begin with the raw amino-acid sequence, 201 residues long: uncharacterized protein (201 aa).

Residues 121–141 (HHRTRPGRGPGPRPGGSAMAG) form a disordered region.

This is an uncharacterized protein from Mycobacterium tuberculosis (strain ATCC 25618 / H37Rv).